A 71-amino-acid chain; its full sequence is Antimicrobial peptide VpCT4 (71 aa).

A signal peptide spans 1–23; it reads MKTQFVILIVAIVILQLISQSEA. Residue leucine 39 is modified to Leucine amide. Positions 40–71 are excised as a propeptide; it reads GKRGVQNMDQFDDIFEPELSEADLRYLQDLLR.

It belongs to the non-disulfide-bridged peptide (NDBP) superfamily. Short antimicrobial peptide (group 4) family. In terms of tissue distribution, expressed by the venom gland.

Its subcellular location is the secreted. It is found in the target cell membrane. In terms of biological role, antimicrobial peptide with potent activity against bacteria S.aureus (MIC=9.3 uM), weak activity against E.coli (MIC&gt;100 uM), and weak activity against pathogenic yeasts C.albicans (MIC=100 uM) and C.glabrata (MIC=100 uM). Is not very effective against P.aeruginosa (MIC&gt;300 uM). Also provokes high hemolysis on human erythrocytes (HC(50)=4.8 uM). This chain is Antimicrobial peptide VpCT4, found in Mesomexovis punctatus (Scorpion).